The chain runs to 85 residues: Exodeoxyribonuclease 7 small subunit (85 aa).

It belongs to the XseB family. In terms of assembly, heterooligomer composed of large and small subunits.

It is found in the cytoplasm. The catalysed reaction is Exonucleolytic cleavage in either 5'- to 3'- or 3'- to 5'-direction to yield nucleoside 5'-phosphates.. Functionally, bidirectionally degrades single-stranded DNA into large acid-insoluble oligonucleotides, which are then degraded further into small acid-soluble oligonucleotides. The sequence is that of Exodeoxyribonuclease 7 small subunit from Mycobacterium bovis (strain ATCC BAA-935 / AF2122/97).